Reading from the N-terminus, the 525-residue chain is Arylsulfatase G (525 aa).

The N-terminal stretch at 1–16 (MGWLFLKVLLVGMAFS) is a signal peptide. Asp-44, Asp-45, and Cys-84 together coordinate Ca(2+). Cys-84 functions as the Nucleophile in the catalytic mechanism. Cys-84 bears the 3-oxoalanine (Cys) mark. N-linked (GlcNAc...) asparagine glycosylation occurs at Asn-117. Residue Lys-137 coordinates substrate. The active site involves His-139. Ser-162 contacts substrate. A glycan (N-linked (GlcNAc...) asparagine) is linked at Asn-215. His-251 serves as a coordination point for substrate. The Ca(2+) site is built by Asp-302 and Asn-303. Residues Asn-356 and Asn-497 are each glycosylated (N-linked (GlcNAc...) asparagine).

It belongs to the sulfatase family. Ca(2+) serves as cofactor. N-glycosylated with both high mannose and complex type sugars. Post-translationally, the conversion to 3-oxoalanine (also known as C-formylglycine, FGly), of a serine or cysteine residue in prokaryotes and of a cysteine residue in eukaryotes, is critical for catalytic activity. In terms of processing, the 63-kDa precursor undergoes proteolytic processing in two steps, yielding two fragments in the first step (apparent molecular masses of 44 and 18 kDa). In the second step, the 44-kDa fragment is processed further to the 34- and 10-kDa chains. The 10-kDa chain is a cleavage product of the 44-kDa fragment but linked to the 18-kDa chain through a disulfide bridge. In terms of tissue distribution, highly expressed in the spleen, kidney, liver, brain, and testis (at protein level).

Its subcellular location is the lysosome. The enzyme catalyses an aryl sulfate + H2O = a phenol + sulfate + H(+). It carries out the reaction Hydrolysis of the 3-sulfate groups of the N-sulfo-D-glucosamine 3-O-sulfate units of heparin.. Displays arylsulfatase activity at acidic pH towards the artificial substrate p-nitrocatechol sulfate. Catalyzes the hydrolysis of the 3-sulfate groups of the N-sulfo-D-glucosamine 3-O-sulfate units of heparin. The polypeptide is Arylsulfatase G (Arsg) (Mus musculus (Mouse)).